The following is a 308-amino-acid chain: uncharacterized protein (308 aa).

The signal sequence occupies residues 1-18 (MKIILLFLAALASFTVHA).

This is an uncharacterized protein from Escherichia coli (strain K12).